Consider the following 101-residue polypeptide: DNA-directed RNA polymerase subunit omega (101 aa).

Low complexity predominate over residues 1 to 13; that stretch reads MSSTPAAASATPS. The segment at 1–22 is disordered; sequence MSSTPAAASATPSHGALPAYDT.

It belongs to the RNA polymerase subunit omega family. The RNAP catalytic core consists of 2 alpha, 1 beta, 1 beta' and 1 omega subunit. When a sigma factor is associated with the core the holoenzyme is formed, which can initiate transcription.

The enzyme catalyses RNA(n) + a ribonucleoside 5'-triphosphate = RNA(n+1) + diphosphate. Promotes RNA polymerase assembly. Latches the N- and C-terminal regions of the beta' subunit thereby facilitating its interaction with the beta and alpha subunits. This chain is DNA-directed RNA polymerase subunit omega, found in Rhodococcus jostii (strain RHA1).